A 218-amino-acid polypeptide reads, in one-letter code: MAQTAMSETYDFLFKFLVIGNAGTGKSCLLHQFIEKKFKDDSNHTIGVEFGSKIINVGGKYVKLQIWDTAGQERFRSVTRSYYRGAAGALLVYDITSRETYNALTNWLTDARMLASQNIVLILCGNKKDLDADREVTFLEASRFAQENELMFLETSALTGENVEEAFMQCARKILNKIESGELDPERMGSGIQYGDAALRQLRSPRRTQAPSAQECGC.

GTP is bound by residues Gly-23, Thr-24, Gly-25, Lys-26, Ser-27, Cys-28, Ser-42, His-44, and Thr-45. Ser-27 provides a ligand contact to Mg(2+). Residues 44–49 carry the Switch 1 motif; that stretch reads HTIGVE. Residues Thr-45 and Asp-68 each coordinate Mg(2+). Residues 70–79 carry the Switch 2 motif; that stretch reads AGQERFRSVT. Gly-71 provides a ligand contact to GTP. Position 72 is a 5-glutamyl serotonin (Gln-72). The GTP site is built by Asn-126, Lys-127, Asp-129, Ala-157, and Leu-158. Residue Ser-190 is modified to Phosphoserine. Ser-204 is modified (phosphoserine; by CDK1). Residues Cys-216 and Cys-218 are each lipidated (S-geranylgeranyl cysteine). Cys-218 is modified (cysteine methyl ester).

This sequence belongs to the small GTPase superfamily. Rab family. Interacts with SGSM1, SGSM2 and SGSM3. Interacts with RAB11FIP1, RABEP1, ZFYVE20 and RUFY1. Interacts (membrane-bound form) with NDRG1; the interaction involves NDRG1 in vesicular recycling of E-cadherin. Interacts (in GTP-bound form) with GRIPAP1 (via N-terminus). Interacts with RABEP1 and RBSN. Does not interact with HPS4. Does not interact with HPS4. Interacts with RABEP2; this interaction may mediate VEGFR2 cell surface expression. The cofactor is Mg(2+). Post-translationally, serotonylation of Gln-72 by TGM2 during activation and aggregation of platelets leads to constitutive activation of GTPase activity. Phosphorylated by CDK1 kinase during mitosis. As to expression, expressed in the central nervous system, including cortex, cerebellum, midbrain and spinal cord, and in the kidney, lung, liver and spleen.

The protein resides in the membrane. It is found in the cytoplasm. The protein localises to the early endosome membrane. It localises to the recycling endosome membrane. It catalyses the reaction GTP + H2O = GDP + phosphate + H(+). Its activity is regulated as follows. Regulated by guanine nucleotide exchange factors (GEFs) which promote the exchange of bound GDP for free GTP. Regulated by GTPase activating proteins (GAPs) which increase the GTP hydrolysis activity. Inhibited by GDP dissociation inhibitors (GDIs). Its function is as follows. The small GTPases Rab are key regulators of intracellular membrane trafficking, from the formation of transport vesicles to their fusion with membranes. Rabs cycle between an inactive GDP-bound form and an active GTP-bound form that is able to recruit to membranes different sets of downstream effectors directly responsible for vesicle formation, movement, tethering and fusion. RAB4A is involved in protein transport. Also plays a role in vesicular traffic. Mediates VEGFR2 endosomal trafficking to enhance VEGFR2 signaling. Acts as a regulator of platelet alpha-granule release during activation and aggregation of platelets. The polypeptide is Ras-related protein Rab-4A (Mus musculus (Mouse)).